The following is a 125-amino-acid chain: Small ribosomal subunit protein bS6m (125 aa).

The protein belongs to the bacterial ribosomal protein bS6 family. In terms of assembly, component of the mitochondrial ribosome small subunit (28S) which comprises a 12S rRNA and about 30 distinct proteins.

It is found in the mitochondrion. In Mus musculus (Mouse), this protein is Small ribosomal subunit protein bS6m (Mrps6).